Consider the following 472-residue polypeptide: Aspartyl/glutamyl-tRNA(Asn/Gln) amidotransferase subunit B (472 aa).

The protein belongs to the GatB/GatE family. GatB subfamily. In terms of assembly, heterotrimer of A, B and C subunits.

The enzyme catalyses L-glutamyl-tRNA(Gln) + L-glutamine + ATP + H2O = L-glutaminyl-tRNA(Gln) + L-glutamate + ADP + phosphate + H(+). It catalyses the reaction L-aspartyl-tRNA(Asn) + L-glutamine + ATP + H2O = L-asparaginyl-tRNA(Asn) + L-glutamate + ADP + phosphate + 2 H(+). Its function is as follows. Allows the formation of correctly charged Asn-tRNA(Asn) or Gln-tRNA(Gln) through the transamidation of misacylated Asp-tRNA(Asn) or Glu-tRNA(Gln) in organisms which lack either or both of asparaginyl-tRNA or glutaminyl-tRNA synthetases. The reaction takes place in the presence of glutamine and ATP through an activated phospho-Asp-tRNA(Asn) or phospho-Glu-tRNA(Gln). This Campylobacter jejuni (strain RM1221) protein is Aspartyl/glutamyl-tRNA(Asn/Gln) amidotransferase subunit B.